The chain runs to 199 residues: Small ribosomal subunit protein uS4 (199 aa).

The 64-residue stretch at 94-157 (SRLDNLVYRA…RKLKLVQEAL (64 aa)) folds into the S4 RNA-binding domain.

It belongs to the universal ribosomal protein uS4 family. In terms of assembly, part of the 30S ribosomal subunit. Contacts protein S5. The interaction surface between S4 and S5 is involved in control of translational fidelity.

In terms of biological role, one of the primary rRNA binding proteins, it binds directly to 16S rRNA where it nucleates assembly of the body of the 30S subunit. Functionally, with S5 and S12 plays an important role in translational accuracy. The protein is Small ribosomal subunit protein uS4 of Mycoplasmopsis synoviae (strain 53) (Mycoplasma synoviae).